The primary structure comprises 139 residues: Large ribosomal subunit protein bL17 (139 aa).

It belongs to the bacterial ribosomal protein bL17 family. As to quaternary structure, part of the 50S ribosomal subunit. Contacts protein L32.

The protein is Large ribosomal subunit protein bL17 of Sphingopyxis alaskensis (strain DSM 13593 / LMG 18877 / RB2256) (Sphingomonas alaskensis).